The chain runs to 450 residues: CD209 antigen (450 aa).

Topologically, residues 1 to 37 (MSDSKEPSVQQLGLLEEEQLRGLGFRQTRGYKSLAGC) are cytoplasmic. 3 consecutive short sequence motifs (endocytosis signal) follow at residues 14–15 (LL), 16–18 (EEE), and 31–34 (YKSL). A helical; Signal-anchor for type II membrane protein membrane pass occupies residues 38–58 (LGHGALVLQLLSFTLLAGLLI). Topologically, residues 59 to 450 (QVSKFPSSIS…APATPNPPPV (392 aa)) are extracellular. Residue Asn-80 is glycosylated (N-linked (GlcNAc...) asparagine). Tandem repeats lie at residues 96 to 118 (KLQE…PEKS), 119 to 141 (KQQE…PEKS), 142 to 164 (KQQE…PEKS), 165 to 187 (KQQE…PEKS), 188 to 210 (KQQE…PEKS), 211 to 233 (KQQE…PEKS), 234 to 256 (KQQE…PEKS), 257 to 279 (KQQE…PEKS), and 280 to 303 (KQQE…RPCP). The tract at residues 96–303 (KLQEIYQELT…AVERLCRPCP (208 aa)) is 9 X approximate tandem repeats. Disulfide bonds link Cys-302–Cys-313, Cys-330–Cys-423, and Cys-402–Cys-415. In terms of domain architecture, C-type lectin spans 309–424 (FQGNCYFMSN…CNLAKFWICK (116 aa)). Positions 393, 395, 397, 400, 411, and 412 each coordinate Ca(2+).

Homotetramer. Interacts with C1QBP; the interaction is indicative for a C1q:C1QBP:CD209 signaling complex. Interacts with ICAM2 and ICAM3 by binding to mannose-like carbohydrates. Interacts (via C-type lectin domain) with CEACAM1 (via Lewis X moieties); this interaction is regulated by the glycosylation pattern of CEACAM1 on cell types and regulates contact between dendritic cells and neutrophils.

Its subcellular location is the membrane. In terms of biological role, pathogen-recognition receptor expressed on the surface of immature dendritic cells (DCs) and involved in initiation of primary immune response. Thought to mediate the endocytosis of pathogens which are subsequently degraded in lysosomal compartments. The receptor returns to the cell membrane surface and the pathogen-derived antigens are presented to resting T-cells via MHC class II proteins to initiate the adaptive immune response. Probably recognizes in a calcium-dependent manner high mannose N-linked oligosaccharides in a variety of pathogen antigens. Functionally, on DCs it is a high affinity receptor for ICAM2 and ICAM3 by binding to mannose-like carbohydrates. May act as a DC rolling receptor that mediates transendothelial migration of DC presursors from blood to tissues by binding endothelial ICAM2. Seems to regulate DC-induced T-cell proliferation by binding to ICAM3 on T-cells in the immunological synapse formed between DC and T-cells. The polypeptide is CD209 antigen (CD209) (Hylobates lar (Lar gibbon)).